Reading from the N-terminus, the 530-residue chain is Arginine--tRNA ligase (530 aa).

The 'HIGH' region motif lies at 113 to 123 (ANPTGPLHIGH).

The protein belongs to the class-I aminoacyl-tRNA synthetase family. Monomer.

Its subcellular location is the cytoplasm. It catalyses the reaction tRNA(Arg) + L-arginine + ATP = L-arginyl-tRNA(Arg) + AMP + diphosphate. The chain is Arginine--tRNA ligase from Campylobacter jejuni subsp. doylei (strain ATCC BAA-1458 / RM4099 / 269.97).